We begin with the raw amino-acid sequence, 73 residues long: Protein OPG058 (73 aa).

This sequence belongs to the orthopoxvirus OPG058 family.

The chain is Protein OPG058 (OPG058) from Vaccinia virus (strain Copenhagen) (VACV).